We begin with the raw amino-acid sequence, 357 residues long: Cyclic AMP-responsive element-binding protein 5 (357 aa).

Residues 114–239 are disordered; the sequence is RQDQTPHHHL…FLERNRAAAT (126 aa). Basic residues-rich tracts occupy residues 120–129 and 138–175; these read HHHLHSHPHQ and PYPH…HPAH. Residues 186–195 are compositionally biased toward polar residues; it reads TGNQAQVSPA. Low complexity predominate over residues 196 to 206; it reads TQQMQPTQTIQ. The span at 218 to 235 shows a compositional bias: basic and acidic residues; that stretch reads VVDEDPDERRRKFLERNR. Positions 224 to 287 constitute a bZIP domain; that stretch reads DERRRKFLER…AQLKQLLLTH (64 aa). Residues 226–246 are basic motif; that stretch reads RRRKFLERNRAAATRCRQKRK. The leucine-zipper stretch occupies residues 252–280; sequence LEKKAEELTQTNMQLQNEVSMLKNEVAQL. Residues 298-318 form a disordered region; sequence ESQGYLSPESSPPASPVPACS.

This sequence belongs to the bZIP family. Binds DNA as a homodimer or as a heterodimer with JUN or ATF2/CREBP1.

Its subcellular location is the nucleus. Its function is as follows. Binds to the cAMP response element and activates transcription. This Mus musculus (Mouse) protein is Cyclic AMP-responsive element-binding protein 5 (Creb5).